Here is a 460-residue protein sequence, read N- to C-terminus: MCTPCCVSQLACCCGSAACSLCCGCCPKIKQSTSTRFMYALFFMLVTVTCVIMMSPTVEMAMREHIPFYSQMCQQLNAGENCSTLVGYSAVYKVCFGMACFFFFFAVFTIRVQNSTGCRAAVHNGFWFFKFVALLACCAGGFFLPNQDQFLEVWRYVGAAGGFLFIIIQLMLLVQFAHRWNQNWSSGATYNKLWYAALALVTLVLFSVAVGGMVFMFMYYTHPEACFLNKIFLGVNGGLCFIVSLLAISPCIQTFQPTSGLLQPAVITLYVMYLTFSALASKPIEMVEDEIKGNITVCVFPFKSGLKSDTNIVTGVGTAILFCCILYSCLISTTKRSSAALQVYRNDMPENERARCCFCWVDDTEDYDDEKTSGGQNVKYDERDGTVYSYCFFHFVFFLGSLYVMMTVTNWFHYDNAKIERLLEGSWSVFWIKMASSWVCLFFYMWTLVVPMLFPQRFQA.

Over 1–36 (MCTPCCVSQLACCCGSAACSLCCGCCPKIKQSTSTR) the chain is Extracellular. The helical transmembrane segment at 37–57 (FMYALFFMLVTVTCVIMMSPT) threads the bilayer. The Cytoplasmic portion of the chain corresponds to 58–89 (VEMAMREHIPFYSQMCQQLNAGENCSTLVGYS). A helical transmembrane segment spans residues 90-110 (AVYKVCFGMACFFFFFAVFTI). The Extracellular segment spans residues 111–124 (RVQNSTGCRAAVHN). An N-linked (GlcNAc...) asparagine glycan is attached at Asn114. The helical transmembrane segment at 125–145 (GFWFFKFVALLACCAGGFFLP) threads the bilayer. Residues 146-156 (NQDQFLEVWRY) are Cytoplasmic-facing. A helical membrane pass occupies residues 157-177 (VGAAGGFLFIIIQLMLLVQFA). Topologically, residues 178–197 (HRWNQNWSSGATYNKLWYAA) are extracellular. An N-linked (GlcNAc...) asparagine glycan is attached at Asn183. A helical membrane pass occupies residues 198-218 (LALVTLVLFSVAVGGMVFMFM). Residues 219 to 230 (YYTHPEACFLNK) lie on the Cytoplasmic side of the membrane. A helical membrane pass occupies residues 231–251 (IFLGVNGGLCFIVSLLAISPC). Topologically, residues 252–259 (IQTFQPTS) are extracellular. Residues 260–280 (GLLQPAVITLYVMYLTFSALA) form a helical membrane-spanning segment. The Cytoplasmic segment spans residues 281–311 (SKPIEMVEDEIKGNITVCVFPFKSGLKSDTN). The helical transmembrane segment at 312–332 (IVTGVGTAILFCCILYSCLIS) threads the bilayer. Residues 333–391 (TTKRSSAALQVYRNDMPENERARCCFCWVDDTEDYDDEKTSGGQNVKYDERDGTVYSYC) are Extracellular-facing. Residues 392 to 412 (FFHFVFFLGSLYVMMTVTNWF) traverse the membrane as a helical segment. Residues 413-433 (HYDNAKIERLLEGSWSVFWIK) are Cytoplasmic-facing. Residues 434-454 (MASSWVCLFFYMWTLVVPMLF) traverse the membrane as a helical segment. The Extracellular segment spans residues 455–460 (PQRFQA).

It belongs to the TDE1 family.

The protein localises to the cell membrane. The catalysed reaction is a 1,2-diacyl-sn-glycero-3-phospho-L-serine(in) = a 1,2-diacyl-sn-glycero-3-phospho-L-serine(out). The enzyme catalyses a 1,2-diacyl-sn-glycero-3-phosphocholine(in) = a 1,2-diacyl-sn-glycero-3-phosphocholine(out). It catalyses the reaction a 1,2-diacyl-sn-glycero-3-phosphoethanolamine(in) = a 1,2-diacyl-sn-glycero-3-phosphoethanolamine(out). Functionally, restriction factor required to restrict infectivity of gammaretroviruses: acts by inhibiting an early step of viral infection. Impairs the penetration of the viral particle into the cytoplasm. Non-ATP-dependent, non-specific lipid transporter for phosphatidylserine, phosphatidylcholine, and phosphatidylethanolamine. Functions as a scramblase that flips lipids in both directions across the membrane. Phospholipid scrambling results in gammaretroviral surface exposure of phosphatidylserine and loss of membrane asymmetry, which leads to loss of infectivity. Enhances the incorporation of serine into phosphatidylserine and sphingolipids. In Danio rerio (Zebrafish), this protein is Serine incorporator 5 (serinc5).